Here is a 150-residue protein sequence, read N- to C-terminus: Thyroid hormone-inducible hepatic protein (150 aa).

The segment at 83–104 (KVAGNETSEAENDAAETEEAEE) is disordered. S90 is modified (phosphoserine). A compositionally biased stretch (acidic residues) spans 90-104 (SEAENDAAETEEAEE).

Belongs to the SPOT14 family. In terms of assembly, homodimer. Heterodimer with MID1IP1. Interacts with THRB and PLAGL1. In terms of tissue distribution, mainly expressed in tissues that synthesize triglycerides.

Its subcellular location is the nucleus. It localises to the cytoplasm. Its function is as follows. Plays a role in the regulation of lipogenesis, especially in lactating mammary gland. Important for the biosynthesis of triglycerides with medium-length fatty acid chains. May modulate lipogenesis by interacting with MID1IP1 and preventing its interaction with ACACA. May function as transcriptional coactivator. May modulate the transcription factor activity of THRB. The sequence is that of Thyroid hormone-inducible hepatic protein (Thrsp) from Mus musculus (Mouse).